Here is a 185-residue protein sequence, read N- to C-terminus: Elongation factor P (185 aa).

The protein belongs to the elongation factor P family.

It is found in the cytoplasm. Its pathway is protein biosynthesis; polypeptide chain elongation. In terms of biological role, involved in peptide bond synthesis. Stimulates efficient translation and peptide-bond synthesis on native or reconstituted 70S ribosomes in vitro. Probably functions indirectly by altering the affinity of the ribosome for aminoacyl-tRNA, thus increasing their reactivity as acceptors for peptidyl transferase. This Aromatoleum aromaticum (strain DSM 19018 / LMG 30748 / EbN1) (Azoarcus sp. (strain EbN1)) protein is Elongation factor P.